Reading from the N-terminus, the 345-residue chain is Ferrochelatase (345 aa).

Positions 215 and 296 each coordinate Fe cation.

The protein belongs to the ferrochelatase family.

It is found in the cytoplasm. The catalysed reaction is heme b + 2 H(+) = protoporphyrin IX + Fe(2+). It functions in the pathway porphyrin-containing compound metabolism; protoheme biosynthesis; protoheme from protoporphyrin-IX: step 1/1. In terms of biological role, catalyzes the ferrous insertion into protoporphyrin IX. The chain is Ferrochelatase from Nitrobacter hamburgensis (strain DSM 10229 / NCIMB 13809 / X14).